The chain runs to 231 residues: ATP-dependent dethiobiotin synthetase BioD (231 aa).

An ATP-binding site is contributed by 13 to 18; the sequence is DVGKTV. Residue Thr-17 coordinates Mg(2+). Residue Lys-38 is part of the active site. Residues Asp-55, 116–119, and 176–177 contribute to the ATP site; these read EGAG and NR. Residues Asp-55 and Glu-116 each contribute to the Mg(2+) site.

It belongs to the dethiobiotin synthetase family. In terms of assembly, homodimer. Requires Mg(2+) as cofactor.

The protein resides in the cytoplasm. The enzyme catalyses (7R,8S)-7,8-diammoniononanoate + CO2 + ATP = (4R,5S)-dethiobiotin + ADP + phosphate + 3 H(+). It participates in cofactor biosynthesis; biotin biosynthesis; biotin from 7,8-diaminononanoate: step 1/2. Catalyzes a mechanistically unusual reaction, the ATP-dependent insertion of CO2 between the N7 and N8 nitrogen atoms of 7,8-diaminopelargonic acid (DAPA, also called 7,8-diammoniononanoate) to form a ureido ring. This Vibrio cholerae serotype O1 (strain ATCC 39315 / El Tor Inaba N16961) protein is ATP-dependent dethiobiotin synthetase BioD.